Consider the following 995-residue polypeptide: DExH-box ATP-dependent RNA helicase DExH1 (995 aa).

Disordered regions lie at residues 1–42 (MPPH…EQRW) and 156–192 (KTTQ…ASKL). Over residues 25-37 (RGGGGRGGGGGGR) the composition is skewed to gly residues. Residues 161–170 (SGSSGASASA) show a composition bias toward low complexity. Residues 171 to 181 (FNDQQDRTSTL) show a composition bias toward polar residues. The Helicase ATP-binding domain occupies 238–405 (LNSVSQNQVL…FGNSPTMHIP (168 aa)). An ATP-binding site is contributed by 251–258 (GETGCGKT). Residues 352-355 (DEIH) carry the DEIH box motif. A disordered region spans residues 429 to 450 (SSDSGNYQGSSRGRRRESESKK). The 180-residue stretch at 484–663 (QIDVDLVEAT…ELCLHIKSLQ (180 aa)) folds into the Helicase C-terminal domain.

It belongs to the DExH box helicase family.

The enzyme catalyses ATP + H2O = ADP + phosphate + H(+). This Arabidopsis thaliana (Mouse-ear cress) protein is DExH-box ATP-dependent RNA helicase DExH1.